Reading from the N-terminus, the 153-residue chain is Prefoldin subunit alpha (153 aa).

This sequence belongs to the prefoldin subunit alpha family. In terms of assembly, heterohexamer of two alpha and four beta subunits.

It localises to the cytoplasm. In terms of biological role, molecular chaperone capable of stabilizing a range of proteins. Seems to fulfill an ATP-independent, HSP70-like function in archaeal de novo protein folding. In Methanothrix thermoacetophila (strain DSM 6194 / JCM 14653 / NBRC 101360 / PT) (Methanosaeta thermophila), this protein is Prefoldin subunit alpha.